The chain runs to 104 residues: Antitoxin HigA-2 (104 aa).

Residues 45–98 (IVSIREQFNMSRGVFARLLHTSSRTLENWEQGRSVPNGQAVTLLKLVQRHPETL) form the HTH cro/C1-type domain. The segment at residues 56-75 (RGVFARLLHTSSRTLENWEQ) is a DNA-binding region (H-T-H motif).

Its function is as follows. Antitoxin component of a type II toxin-antitoxin (TA) system that counteracts the effect of the HigB-2 toxin. Binds to its own promoter and regulates transcription of the higB-2/higA-2 operon. The protein is Antitoxin HigA-2 (higA-2) of Vibrio cholerae serotype O1 (strain ATCC 39315 / El Tor Inaba N16961).